The following is a 155-amino-acid chain: uncharacterized protein (155 aa).

Residues 6–155 form the N-acetyltransferase domain; it reads LRIELGEETN…RDMVRLYLDL (150 aa). Residues 69 to 71, 77 to 82, and 111 to 117 contribute to the CoA site; these read IAV, KKGFGK, and QLSLYQK.

In terms of biological role, probable N-acetyltransferase. This is an uncharacterized protein from Bacillus subtilis (strain 168).